Reading from the N-terminus, the 128-residue chain is Azurin (128 aa).

The region spanning 1 to 128 (AECSVDIQGN…AMMKGTLTLK (128 aa)) is the Plastocyanin-like domain. 4 residues coordinate Cu cation: histidine 46, cysteine 112, histidine 117, and methionine 121.

It is found in the periplasm. Transfers electrons from cytochrome c551 to cytochrome oxidase. The polypeptide is Azurin (Pseudomonas denitrificans).